The primary structure comprises 316 residues: Acetaldehyde dehydrogenase 1 (316 aa).

Residue 12–15 participates in NAD(+) binding; it reads SGNI. The Acyl-thioester intermediate role is filled by Cys132. Residues 163 to 171 and Asn291 each bind NAD(+); that span reads SAGPGTRAN.

This sequence belongs to the acetaldehyde dehydrogenase family.

The catalysed reaction is acetaldehyde + NAD(+) + CoA = acetyl-CoA + NADH + H(+). The protein is Acetaldehyde dehydrogenase 1 of Pseudomonas putida (strain ATCC 700007 / DSM 6899 / JCM 31910 / BCRC 17059 / LMG 24140 / F1).